The chain runs to 496 residues: Cytochrome P450 71D95 (496 aa).

A helical; Signal-anchor membrane pass occupies residues 2–22; the sequence is ELQISSAIIILVATFVASLLI. Residue Cys-436 participates in heme binding.

Belongs to the cytochrome P450 family. The cofactor is heme.

It localises to the endoplasmic reticulum membrane. The enzyme catalyses (4S)-limonene + reduced [NADPH--hemoprotein reductase] + O2 = (1S,6R)-isopiperitenol + oxidized [NADPH--hemoprotein reductase] + H2O + H(+). Hydroxylates both (+)- and (-)-limonene to (+) and (-)-trans-isopiperitenol. This is Cytochrome P450 71D95 (CYP71D95) from Mentha spicata (Spearmint).